A 709-amino-acid chain; its full sequence is MEGIGDITVEKVETKIQETPISIETGYFAKQSNGAVIVRQGETAVFVAAVISEEAQADIDFLPLTVDYREKTYAYGKIPGGFVKREGKPTVREILVSRLIDRPIRPMFPKGFFNDVIITAMTLSADDKYDPDVLAIVGASAALHITEAPFEGPVAGVRVCRLDGEFIVNPTYEQRNRSDIDIVVAGTKDAIVMVEGGSEEVSEEVILDAILFAHEEIKKLCDLQEELRSKVGKEKITVEIDEEDERIKAELESIVRESVKEAFNILDKKERNKRIKEIYEEAIQKIEIPEEKEKKAEVIYKEIVSNIMREKVLKEKVRIDGRRPDEIRPIWIRTGLFPRIHGSAIFTRGQTQAFVATTLGAPGEEQIEESIEEGEEKKRFMLHYNFPPFSTGEARPPRAPSRREIGHGNLAERAIEPLIPDEEEFPYVIRVVSEILESNGSTSMATVCGASLSLFDAGVPMKKHVAGIAMGLLKEDDDYVILTDILGDEDHLGDMDFKVAGTRDGVTSIQMDIKIKGLSKEILQEALEQAKKARMHILDLMYKAMPQPRPELSPHAPKVITMRVLPEKIPVIIGPSGKNIKKIIDETGVKIDLDQEGLVRIYAVDGESADKAKEMIERLIMDIELGEVYMGKVTRVEDYGAFVELMPGKLSLLHVSQISPERIRSAKEKIKVGDILTVKVIDIDEMGRAKVSLKEVREGEEPKNKFLFE.

The Mg(2+) site is built by D490 and D496. Positions 557 to 616 constitute a KH domain; the sequence is PKVITMRVLPEKIPVIIGPSGKNIKKIIDETGVKIDLDQEGLVRIYAVDGESADKAKEMI. Residues 626–694 form the S1 motif domain; sequence GEVYMGKVTR…EMGRAKVSLK (69 aa).

This sequence belongs to the polyribonucleotide nucleotidyltransferase family. Mg(2+) is required as a cofactor.

The protein localises to the cytoplasm. The enzyme catalyses RNA(n+1) + phosphate = RNA(n) + a ribonucleoside 5'-diphosphate. Its function is as follows. Involved in mRNA degradation. Catalyzes the phosphorolysis of single-stranded polyribonucleotides processively in the 3'- to 5'-direction. The chain is Polyribonucleotide nucleotidyltransferase from Persephonella marina (strain DSM 14350 / EX-H1).